The following is an 834-amino-acid chain: MPRYPFRRFGFGALRRLLYLWVRSETINQSAFTLKIDRSKPVLYVLQQPSVSDLAVVDTECRKAGLPRPVMPVAVGDAIEPAAFFYLTPEPDWLGRQDKRGASPTLVRMLAAVGQNGLDDAQIIPVSVFWGQSPDSESSPWKLLFADNWAVTGRLRKLARILILGRKTRVQFSAPIHLRELVEQGKGHERTLRMVNRILRVHFRNLKTAVIGPDLSHRRNLVKGLLRAPLVRQAISEECESERISQEKAEGIALRYANEIASDFSYPVIRFLEVILSWFWNKLYEGVKVNHIERVQDVAQGNEIVYVPCHRSHIDYLLLSYLLFRNGLTPPHIAAGINLNMPVIGSILRRGGAFFMRRSFKGNQLYTAVFNEYLHTLFSRGFSTEYFVEGGRSRTGRMLHPRTGMLAITLRSFLRDSRRPIVFVPVYIGYERVLEGRTYLGELRGATKKKESIFDLFKVVGALKQRFGQVWVNFGEPIHLDQFLDRHQPDWQDQDLGPEYRPDWLPQTTNLLAKDVARHLNDAAAINPVNLVALALLSTSRQALDESALARILDLYLALLRQVPYSPSATLPDGDGQALIEYVKSMNLLAEQKDALGRILYLDEQNAVLATYYRNNVLHVFALPALIASFFQSNSRISREQLLRFARALYPYLQAELFIRWSLDELDAVIDQWLAALVEQGLLRQENDTFIRPAPSSRQYVLLILLARSVTQTLQRFYMAIALLLNAGQNALTAEELENLCTVMAQRLSILHGLNAPEFFDKSLFRHFIQTLLDLRVLRKDETGKLSYHELLGELAEGAAKRVLPAEIRLSIRQVALERPAEEAAAESNDAATN.

An HXXXXD motif motif is present at residues 309–314 (CHRSHI).

Belongs to the GPAT/DAPAT family.

Its subcellular location is the cell inner membrane. It catalyses the reaction sn-glycerol 3-phosphate + an acyl-CoA = a 1-acyl-sn-glycero-3-phosphate + CoA. Its pathway is phospholipid metabolism; CDP-diacylglycerol biosynthesis; CDP-diacylglycerol from sn-glycerol 3-phosphate: step 1/3. The polypeptide is Glycerol-3-phosphate acyltransferase (Pseudomonas paraeruginosa (strain DSM 24068 / PA7) (Pseudomonas aeruginosa (strain PA7))).